Here is a 390-residue protein sequence, read N- to C-terminus: Succinate--CoA ligase [ADP-forming] subunit beta (390 aa).

Positions 9–248 (KDILRKFGVT…TSEEDPFEVE (240 aa)) constitute an ATP-grasp domain. Residues lysine 50, 57-59 (GRG), glutamate 103, methionine 106, and glutamate 111 contribute to the ATP site. Residues asparagine 203 and aspartate 217 each coordinate Mg(2+). Residues asparagine 268 and 325–327 (GIV) contribute to the substrate site.

The protein belongs to the succinate/malate CoA ligase beta subunit family. Heterotetramer of two alpha and two beta subunits. Mg(2+) is required as a cofactor.

The catalysed reaction is succinate + ATP + CoA = succinyl-CoA + ADP + phosphate. It catalyses the reaction GTP + succinate + CoA = succinyl-CoA + GDP + phosphate. It participates in carbohydrate metabolism; tricarboxylic acid cycle; succinate from succinyl-CoA (ligase route): step 1/1. Its function is as follows. Succinyl-CoA synthetase functions in the citric acid cycle (TCA), coupling the hydrolysis of succinyl-CoA to the synthesis of either ATP or GTP and thus represents the only step of substrate-level phosphorylation in the TCA. The beta subunit provides nucleotide specificity of the enzyme and binds the substrate succinate, while the binding sites for coenzyme A and phosphate are found in the alpha subunit. The polypeptide is Succinate--CoA ligase [ADP-forming] subunit beta (Chlorobium chlorochromatii (strain CaD3)).